A 356-amino-acid chain; its full sequence is 3,4-dihydroxy-2-butanone 4-phosphate synthase (356 aa).

Residues 1 to 211 (MNAILSDQKT…ISDIVEYRMM (211 aa)) are DHBP synthase. D-ribulose 5-phosphate contacts are provided by residues 38–39 (RE), D43, 150–154 (RIGHT), and E174. E39 contacts Mg(2+). H153 is a Mg(2+) binding site. A GTP cyclohydrolase II-like region spans residues 212 to 356 (NESLIRVIAE…KSTNVNETVA (145 aa)).

The protein in the N-terminal section; belongs to the DHBP synthase family. In the C-terminal section; belongs to the GTP cyclohydrolase II family. It depends on Mg(2+) as a cofactor. Mn(2+) serves as cofactor.

The catalysed reaction is D-ribulose 5-phosphate = (2S)-2-hydroxy-3-oxobutyl phosphate + formate + H(+). The protein operates within cofactor biosynthesis; riboflavin biosynthesis; 2-hydroxy-3-oxobutyl phosphate from D-ribulose 5-phosphate: step 1/1. Catalyzes the conversion of D-ribulose 5-phosphate to formate and 3,4-dihydroxy-2-butanone 4-phosphate. The protein is 3,4-dihydroxy-2-butanone 4-phosphate synthase (ribB) of Sulfurospirillum multivorans (Dehalospirillum multivorans).